The chain runs to 548 residues: Hydroxylamine reductase (548 aa).

Residues C3, C6, C15, and C21 each coordinate [4Fe-4S] cluster. The hybrid [4Fe-2O-2S] cluster site is built by H240, E264, C308, C402, C430, C455, E490, and K492. The residue at position 402 (C402) is a Cysteine persulfide.

The protein belongs to the HCP family. [4Fe-4S] cluster serves as cofactor. Requires hybrid [4Fe-2O-2S] cluster as cofactor.

The protein resides in the cytoplasm. It carries out the reaction A + NH4(+) + H2O = hydroxylamine + AH2 + H(+). Its function is as follows. Catalyzes the reduction of hydroxylamine to form NH(3) and H(2)O. In Parabacteroides distasonis (strain ATCC 8503 / DSM 20701 / CIP 104284 / JCM 5825 / NCTC 11152), this protein is Hydroxylamine reductase.